A 302-amino-acid polypeptide reads, in one-letter code: Alpha-ketoglutarate-dependent dioxygenase alkB homolog 4 (302 aa).

A2 bears the N-acetylalanine mark. At T8 the chain carries Phosphothreonine. One can recognise a Fe2OG dioxygenase domain in the interval 150 to 274 (PVEQCNLDYC…RVCVTFRELS (125 aa)). Residues H169, D171, and H254 each coordinate Fe cation. R265 is a 2-oxoglutarate binding site.

This sequence belongs to the alkB family. In terms of assembly, interacts with ZFHX3, MLLT3, MLLT1, HSF4, EP300, TES, EIF3C, MTMR6 and PSMA6. Requires Fe(2+) as cofactor. In terms of tissue distribution, widely expressed, with highest expression in pancreas, ovary and spleen.

It is found in the cytoplasm. The protein localises to the nucleus. The protein resides in the nucleolus. Its subcellular location is the midbody. The catalysed reaction is an N(6)-methyl-2'-deoxyadenosine in DNA + 2-oxoglutarate + O2 = a 2'-deoxyadenosine in DNA + formaldehyde + succinate + CO2. It carries out the reaction N(6)-methyl-L-lysyl-[protein] + 2-oxoglutarate + O2 = L-lysyl-[protein] + formaldehyde + succinate + CO2. Functionally, dioxygenase that mediates demethylation of actin monomethylated at 'Lys-84' (K84me1), thereby acting as a regulator of actomyosin-processes. Demethylation of actin K84me1 is required for maintaining actomyosin dynamics supporting normal cleavage furrow ingression during cytokinesis and cell migration. In addition to proteins, also demethylates DNA: specifically demethylates DNA methylated on the 6th position of adenine (N(6)-methyladenosine) DNA, thereby regulating Polycomb silencing. The polypeptide is Alpha-ketoglutarate-dependent dioxygenase alkB homolog 4 (Homo sapiens (Human)).